The sequence spans 100 residues: Small ribosomal subunit protein uS14 (100 aa).

This sequence belongs to the universal ribosomal protein uS14 family. Part of the 30S ribosomal subunit. Contacts proteins S3 and S10.

Functionally, binds 16S rRNA, required for the assembly of 30S particles and may also be responsible for determining the conformation of the 16S rRNA at the A site. The sequence is that of Small ribosomal subunit protein uS14 from Acaryochloris marina (strain MBIC 11017).